Here is a 718-residue protein sequence, read N- to C-terminus: Polyribonucleotide nucleotidyltransferase (718 aa).

The Mg(2+) site is built by aspartate 487 and aspartate 493. One can recognise a KH domain in the interval 554–613 (PRIETFKIPTDKIREVIGTGGKVIREIVEKTGAKVNIEDDGTVKVASSDGESIKAAIKWI). An S1 motif domain is found at 623 to 691 (GEIYEGTVVK…DRGKTRLSMR (69 aa)). The segment at 694-718 (DQETGEDLEAKQKAEGEAPAQATGE) is disordered.

The protein belongs to the polyribonucleotide nucleotidyltransferase family. Requires Mg(2+) as cofactor.

It is found in the cytoplasm. It carries out the reaction RNA(n+1) + phosphate = RNA(n) + a ribonucleoside 5'-diphosphate. Its function is as follows. Involved in mRNA degradation. Catalyzes the phosphorolysis of single-stranded polyribonucleotides processively in the 3'- to 5'-direction. The polypeptide is Polyribonucleotide nucleotidyltransferase (Rhodopseudomonas palustris (strain HaA2)).